Here is a 2057-residue protein sequence, read N- to C-terminus: Myosin heavy chain, non-muscle (2057 aa).

The region spanning 78 to 128 (HRSVLVWVPHENQGFVAASIKREHGDEVEVELAETGKRVMILRDDIQKMNP) is the Myosin N-terminal SH3-like domain. The Myosin motor domain occupies 132–867 (DKVEDMAELT…VLAHLEEERD (736 aa)). Residue 225–232 (GESGAGKT) coordinates ATP. The tract at residues 250 to 260 (PKGSGAVPHPA) is 25 kDa/50 kDa junction. Residues 722-734 (DTQFGARTRKGMF) form a 50 kDa/20 kDa junction region. The actin-binding stretch occupies residues 745 to 767 (LAKLMDTLRNTNPNFVRCIIPNH). The reactive sulfhydryl/actin-binding stretch occupies residues 782–798 (QLRCNGVLEGIRICRQG). Residues 870-899 (ISDLIVNFQAFCRGFLARRNYQKRLQQLNA) form the IQ domain. Residues 926–2016 (KPLLEVTKQE…SLKTKLRRTG (1091 aa)) adopt a coiled-coil conformation. Disordered regions lie at residues 1124-1144 (EERL…KRKI), 1782-1802 (SSER…EEIA), and 2008-2057 (LKTK…DSAN). An alpha-helical tailpiece (LMM) region spans residues 1343-2010 (SQIAELQVKL…MNREINSLKT (668 aa)). The interval 1343 to 2057 (SQIAELQVKL…ESLDGEDSAN (715 aa)) is light meromyosin (LMM). Over residues 1782 to 1792 (SSERARRAAET) the composition is skewed to basic and acidic residues. Residues 2011–2057 (KLRRTGGIGLSSSRLTGTPSSKRAGGGGGSDDSSVQDESLDGEDSAN) form a globular tailpiece region. 2 positions are modified to phosphoserine: S2021 and S2022. Over residues 2044 to 2057 (SVQDESLDGEDSAN) the composition is skewed to acidic residues.

The protein belongs to the TRAFAC class myosin-kinesin ATPase superfamily. Myosin family. In terms of assembly, interacts with sau. Interacts with ck and Ubr3. Ubiquitinated. In Johnston's organ, expressed in neurons and scolopale cells.

The protein resides in the cell projection. The protein localises to the cilium. It is found in the cytoplasm. In terms of biological role, nonmuscle myosin appears to be responsible for cellularization. Required for morphogenesis and cytokinesis. Necessary for auditory transduction: plays a role in Johnston's organ organization by acting in scolopidial apical attachment. Interaction with the myosin ck may be important for this function. Localizes to and defines the trailing edge of cells during larval epidermal wound healing. This process is dependent on the phosphatidylinositol 4-phosphate 5-kinase sktl/skittles. The chain is Myosin heavy chain, non-muscle (zip) from Drosophila melanogaster (Fruit fly).